The following is a 30-amino-acid chain: Cycloviolacin-O1 (30 aa).

Positions 1–30 (GIPCAESCVYIPCTVTALLGCSCSNRVCYN) form a cross-link, cyclopeptide (Gly-Asn). Cystine bridges form between Cys4-Cys21, Cys8-Cys23, and Cys13-Cys28.

This is a cyclic peptide. In terms of tissue distribution, expressed in leaves, petals, petioles and roots but not in runners (at protein level).

Probably participates in a plant defense mechanism. The polypeptide is Cycloviolacin-O1 (Viola odorata (Sweet violet)).